A 213-amino-acid chain; its full sequence is N-(5'-phosphoribosyl)anthranilate isomerase (213 aa).

It belongs to the TrpF family.

It carries out the reaction N-(5-phospho-beta-D-ribosyl)anthranilate = 1-(2-carboxyphenylamino)-1-deoxy-D-ribulose 5-phosphate. The protein operates within amino-acid biosynthesis; L-tryptophan biosynthesis; L-tryptophan from chorismate: step 3/5. This chain is N-(5'-phosphoribosyl)anthranilate isomerase, found in Rhodopseudomonas palustris (strain TIE-1).